The sequence spans 515 residues: Interferon alpha/beta receptor 2 (515 aa).

The first 26 residues, 1–26 (MLLSQNAFIFRSLNLVLMVYISLVFG), serve as a signal peptide directing secretion. The Extracellular portion of the chain corresponds to 27–243 (ISYDSPDYTD…QESESAESAK (217 aa)). 2 disulfides stabilise this stretch: Cys-39-Cys-122 and Cys-85-Cys-93. Residues Asn-58, Asn-87, Asn-116, Asn-188, and Asn-192 are each glycosylated (N-linked (GlcNAc...) asparagine). The cysteines at positions 207 and 227 are disulfide-linked. A helical membrane pass occupies residues 244 to 264 (IGGIITVFLIALVLTSTIVTL). Topologically, residues 265–515 (KWIGYICLRN…VDLGDGYIMR (251 aa)) are cytoplasmic. Disordered stretches follow at residues 318-418 (YDDE…EGSG) and 455-515 (EMVD…YIMR). At Tyr-337 the chain carries Phosphotyrosine. The span at 362-375 (PESEEEPDLPEVDV) shows a compositional bias: acidic residues. Ser-400 is subject to Phosphoserine. The tract at residues 418-444 (GGRITFNVDLNSVFLRVLDDEDSDDLE) is mediates interaction with STAT2 (and required for the recruitment of USP18). Polar residues predominate over residues 464-488 (NVQSNHLLASGEGTQPTFPSPSSEG). Residue Ser-467 is modified to Phosphoserine. A Phosphotyrosine modification is found at Tyr-512.

Belongs to the type II cytokine receptor family. Heterodimer with IFNAR1; forming the receptor for type I interferon. Interacts with JAK1. Interacts with the transcriptional factors STAT1 and STAT2. Interacts with USP18; indirectly via STAT2, it negatively regulates the assembly of the ternary interferon-IFNAR1-IFNAR2 complex and therefore type I interferon signaling. Phosphorylated on tyrosine residues upon interferon binding. Phosphorylation at Tyr-337 or Tyr-512 are sufficient to mediate interferon dependent activation of STAT1, STAT2 and STAT3 leading to antiproliferative effects on many different cell types. Post-translationally, glycosylated. Isoform 3 is detected in the urine (at protein level). Expressed in blood cells. Expressed in lymphoblastoid and fibrosarcoma cell lines.

Its subcellular location is the cell membrane. The protein localises to the secreted. Functionally, together with IFNAR1, forms the heterodimeric receptor for type I interferons (including interferons alpha, beta, epsilon, omega and kappa). Type I interferon binding activates the JAK-STAT signaling cascade, resulting in transcriptional activation or repression of interferon-regulated genes that encode the effectors of the interferon response. Mechanistically, type I interferon-binding brings the IFNAR1 and IFNAR2 subunits into close proximity with one another, driving their associated Janus kinases (JAKs) (TYK2 bound to IFNAR1 and JAK1 bound to IFNAR2) to cross-phosphorylate one another. The activated kinases phosphorylate specific tyrosine residues on the intracellular domains of IFNAR1 and IFNAR2, forming docking sites for the STAT transcription factors (STAT1, STAT2 and STAT). STAT proteins are then phosphorylated by the JAKs, promoting their translocation into the nucleus to regulate expression of interferon-regulated genes. Potent inhibitor of type I IFN receptor activity. This chain is Interferon alpha/beta receptor 2 (IFNAR2), found in Homo sapiens (Human).